We begin with the raw amino-acid sequence, 316 residues long: Ubiquinol oxidase, mitochondrial (316 aa).

Residues 1-26 constitute a mitochondrion transit peptide; it reads MGVRAQPLLARSLITTTQPWILSARS. A helical membrane pass occupies residues 124–144; sequence VHRAVVLETVAAVPGMVAGML. The Fe cation site is built by E131, E170, and H173. A helical membrane pass occupies residues 189-209; it reads MLVALVQTLFFNVYFLAYMLF. The Fe cation site is built by E221, E272, and H275.

This sequence belongs to the alternative oxidase family. Requires Fe cation as cofactor.

The protein resides in the mitochondrion inner membrane. It catalyses the reaction 2 a ubiquinol + O2 = 2 a ubiquinone + 2 H2O. Alternative oxidase which function may be to reoxidize reducing equivalents produced by glycolysis such as ubiquinol. This chain is Ubiquinol oxidase, mitochondrial (AOX), found in Batrachochytrium dendrobatidis (strain JAM81 / FGSC 10211) (Frog chytrid fungus).